The sequence spans 187 residues: UPF0301 protein YqgE (187 aa).

It belongs to the UPF0301 (AlgH) family.

This Escherichia coli O139:H28 (strain E24377A / ETEC) protein is UPF0301 protein YqgE.